A 397-amino-acid polypeptide reads, in one-letter code: Kappa-carrageenase (397 aa).

The first 25 residues, 1 to 25 (MKPISIVAFPIPAISMLLLSAVSQA), serve as a signal peptide directing secretion. Residues 26–299 (ASMQPPIAKP…YVRTWVKVGN (274 aa)) enclose the GH16 domain. A disulfide bridge links Cys-98 with Cys-268. Residue Glu-163 is the Nucleophile of the active site. The active site involves Asp-165. Glu-168 acts as the Proton donor in catalysis. The BIG2 domain occupies 316-387 (AVNSVQLSAA…TITVKTKNKG (72 aa)).

This sequence belongs to the glycosyl hydrolase 16 family.

The protein resides in the periplasm. The catalysed reaction is Endohydrolysis of (1-&gt;4)-beta-D-linkages between D-galactose 4-sulfate and 3,6-anhydro-D-galactose in kappa-carrageenans.. The chain is Kappa-carrageenase (cgkA) from Pseudoalteromonas carrageenovora (Alteromonas carrageenovora).